A 312-amino-acid polypeptide reads, in one-letter code: tRNA dimethylallyltransferase (312 aa).

11–18 (GATATGKT) is an ATP binding site. Residue 13 to 18 (TATGKT) coordinates substrate. The tract at residues 36 to 39 (DSRQ) is interaction with substrate tRNA.

The protein belongs to the IPP transferase family. Monomer. Requires Mg(2+) as cofactor.

The catalysed reaction is adenosine(37) in tRNA + dimethylallyl diphosphate = N(6)-dimethylallyladenosine(37) in tRNA + diphosphate. Catalyzes the transfer of a dimethylallyl group onto the adenine at position 37 in tRNAs that read codons beginning with uridine, leading to the formation of N6-(dimethylallyl)adenosine (i(6)A). The sequence is that of tRNA dimethylallyltransferase from Thermosynechococcus vestitus (strain NIES-2133 / IAM M-273 / BP-1).